The chain runs to 231 residues: Inner membrane protein YohK (231 aa).

A topological domain (periplasmic) is located at residue M1. A helical transmembrane segment spans residues 2–22; it reads MANIWWSLPLTLIVFFAARKL. The Cytoplasmic segment spans residues 23 to 29; it reads AARYKFP. A helical transmembrane segment spans residues 30-50; it reads LLNPLLVAMVVIIPFLMLTGI. Over 51-90 the chain is Periplasmic; it reads SYDSYFKGSEVLNDLLQPAVVALAYPLYEQLHQIRARWKS. A helical membrane pass occupies residues 91-111; the sequence is IITICFIGSVVAMVTGTSVAL. At 112–118 the chain is on the cytoplasmic side; the sequence is LMGASPE. 2 helical membrane passes run 119–139 and 140–160; these read IAASILPKSVTTPIAMAVGGS and IGGIPAISAVCVIFVGILGAV. Residues 161–208 lie on the Cytoplasmic side of the membrane; sequence FGHTLLNAMRIRTKAARGLAMGTASHALGTARCAELDYQEGAFSSLAL. The helical transmembrane segment at 209–229 threads the bilayer; sequence VLCGIITSLIAPFLFPIILAV. The Periplasmic portion of the chain corresponds to 230 to 231; that stretch reads MG.

This sequence belongs to the YohK (E.coli)/YwbG (IPA-22R) (B.subtilis) family.

It localises to the cell inner membrane. The chain is Inner membrane protein YohK (yohK) from Escherichia coli (strain K12).